Reading from the N-terminus, the 354-residue chain is Guanine nucleotide-binding protein G(i) subunit alpha (354 aa).

Glycine 2 carries the N-myristoyl glycine lipid modification. Residue cysteine 3 is the site of S-palmitoyl cysteine attachment. The G-alpha domain occupies 32-354; it reads REVKLLLLGA…KNNLKDCGLF (323 aa). Residues 35–48 are G1 motif; sequence KLLLLGAGESGKST. GTP contacts are provided by residues 40–47, 175–181, 200–204, 269–272, and alanine 326; these read GAGESGKS, LRTRVKT, DVGGQ, and NKKD. Serine 47 and threonine 181 together coordinate Mg(2+). The segment at 173–181 is G2 motif; it reads DVLRTRVKT. Positions 196–205 are G3 motif; it reads FKMFDVGGQR. Residues 265-272 form a G4 motif region; that stretch reads ILFLNKKD. Residues 324 to 329 form a G5 motif region; the sequence is TCATDT.

Belongs to the G-alpha family. G(i/o/t/z) subfamily. As to quaternary structure, g proteins are composed of 3 units; alpha, beta and gamma. The alpha chain contains the guanine nucleotide binding site.

Its function is as follows. Guanine nucleotide-binding proteins (G proteins) are involved as modulators or transducers in various transmembrane signaling systems. The protein is Guanine nucleotide-binding protein G(i) subunit alpha of Planorbella trivolvis (Marsh rams-horn).